Consider the following 1268-residue polypeptide: uncharacterized protein (1268 aa).

The span at 191–206 (KIVSVKPSKSSQQVDV) shows a compositional bias: low complexity. 2 disordered regions span residues 191 to 235 (KIVS…SKKK) and 253 to 273 (NCRS…SKGC). Positions 223–235 (RKPEKSSQDSKKK) are enriched in basic and acidic residues. The CCHC-type zinc-finger motif lies at 239-256 (PTCFYCNKKGHYATNCRS). The region spanning 465–644 (EMGVIVPITY…KQVTFLGFVD (180 aa)) is the Reverse transcriptase domain. An Integrase catalytic domain is found at 844–997 (VPEAPWKRIH…TPAECHFGRK (154 aa)). Residues 1092–1268 (GDYSRSSVNP…RRERVRTTWR (177 aa)) are disordered. Composition is skewed to polar residues over residues 1127 to 1143 (VTSN…SRIT) and 1160 to 1169 (GSCSPTNNDV). Positions 1208–1221 (PSTSTGTPRGSTST) are enriched in low complexity. Positions 1222–1249 (QLGQASTRNGSRYTASGRNPSCQGNRYS) are enriched in polar residues. The segment covering 1257–1268 (TARRERVRTTWR) has biased composition (basic and acidic residues).

This is an uncharacterized protein from Caenorhabditis elegans.